The sequence spans 160 residues: Phosphopantetheine adenylyltransferase (160 aa).

Position 10 (Ser-10) interacts with substrate. Residues 10-11 and His-18 contribute to the ATP site; that span reads SF. 3 residues coordinate substrate: Lys-42, Thr-74, and Arg-88. Residues 89–91, Glu-99, and 124–130 each bind ATP; these read GLR and YSFVSST.

Belongs to the bacterial CoaD family. In terms of assembly, homohexamer. It depends on Mg(2+) as a cofactor.

It localises to the cytoplasm. It catalyses the reaction (R)-4'-phosphopantetheine + ATP + H(+) = 3'-dephospho-CoA + diphosphate. Its pathway is cofactor biosynthesis; coenzyme A biosynthesis; CoA from (R)-pantothenate: step 4/5. Its function is as follows. Reversibly transfers an adenylyl group from ATP to 4'-phosphopantetheine, yielding dephospho-CoA (dPCoA) and pyrophosphate. This Leptospira biflexa serovar Patoc (strain Patoc 1 / Ames) protein is Phosphopantetheine adenylyltransferase.